A 100-amino-acid chain; its full sequence is High mobility group protein C (100 aa).

A DNA-binding region (HMG box) is located at residues 12–80; sequence PKRPLSAFFL…KYEKDMQAYE (69 aa). The interval 81–100 is disordered; sequence KKYGKPEKQKKIKKNKKGSK. Residues 90–100 are compositionally biased toward basic residues; the sequence is KKIKKNKKGSK.

The protein localises to the nucleus. Its subcellular location is the chromosome. The sequence is that of High mobility group protein C from Tetrahymena thermophila.